The sequence spans 154 residues: Myoglobin (154 aa).

In terms of domain architecture, Globin spans Gly2 to Lys148. Ser4 is modified (phosphoserine). Position 65 (His65) interacts with nitrite. His65 is an O2 binding site. A Phosphothreonine modification is found at Thr68. A heme b-binding site is contributed by His94.

It belongs to the globin family. In terms of assembly, monomeric.

Its subcellular location is the cytoplasm. It localises to the sarcoplasm. The catalysed reaction is Fe(III)-heme b-[protein] + nitric oxide + H2O = Fe(II)-heme b-[protein] + nitrite + 2 H(+). It catalyses the reaction H2O2 + AH2 = A + 2 H2O. In terms of biological role, monomeric heme protein which primary function is to store oxygen and facilitate its diffusion within muscle tissues. Reversibly binds oxygen through a pentacoordinated heme iron and enables its timely and efficient release as needed during periods of heightened demand. Depending on the oxidative conditions of tissues and cells, and in addition to its ability to bind oxygen, it also has a nitrite reductase activity whereby it regulates the production of bioactive nitric oxide. Under stress conditions, like hypoxia and anoxia, it also protects cells against reactive oxygen species thanks to its pseudoperoxidase activity. The sequence is that of Myoglobin (MB) from Erinaceus europaeus (Western European hedgehog).